Here is a 331-residue protein sequence, read N- to C-terminus: Phosphate acyltransferase (331 aa).

Belongs to the PlsX family. In terms of assembly, homodimer. Probably interacts with PlsY.

It is found in the cytoplasm. The enzyme catalyses a fatty acyl-[ACP] + phosphate = an acyl phosphate + holo-[ACP]. The protein operates within lipid metabolism; phospholipid metabolism. Functionally, catalyzes the reversible formation of acyl-phosphate (acyl-PO(4)) from acyl-[acyl-carrier-protein] (acyl-ACP). This enzyme utilizes acyl-ACP as fatty acyl donor, but not acyl-CoA. This chain is Phosphate acyltransferase, found in Lactococcus lactis subsp. cremoris (strain SK11).